Reading from the N-terminus, the 1462-residue chain is Trifunctional nucleotide phosphoesterase protein YfkN (1462 aa).

An N-terminal signal peptide occupies residues 1 to 35; the sequence is MRIQKRRTHVENILRILLPPIMILSLILPTPPIHA. The interval 36-623 is 2',3'-cyclic nucleotide 2'-phosphodiesterase/3'-nucleotidase; the sequence is EESAAPQVHL…GTNLTFESSL (588 aa). 7 residues coordinate a divalent metal cation: aspartate 52, histidine 54, aspartate 97, asparagine 141, histidine 249, histidine 282, and histidine 284. Residues tyrosine 458 and 561 to 567 each bind a ribonucleoside 3'-phosphate; that span reads YRASGGG. A 5'-nucleotidase region spans residues 624–1427; that stretch reads LAKPFADKAD…GPAGGLLPDT (804 aa). The a divalent metal cation site is built by aspartate 676, histidine 678, aspartate 708, asparagine 740, histidine 872, histidine 895, and histidine 897. Residues phenylalanine 1047 and 1127-1133 each bind a ribonucleoside 5'-phosphate; that span reads FVGAGGD. A disordered region spans residues 1350 to 1422; that stretch reads ILNSGSNNKP…GSGTDGPAGG (73 aa). Residues 1405 to 1421 show a composition bias toward gly residues; the sequence is GSGGNGSGGSGTDGPAG. Residues 1424–1428 carry the LPXTG sorting signal motif; sequence LPDTA. Pentaglycyl murein peptidoglycan amidated threonine is present on threonine 1427. A propeptide spans 1428–1462 (removed by sortase); sequence ATSMYSILLAGFLISALGTAMYLHQRRKQNRANQA.

Belongs to the 5'-nucleotidase family. Requires a divalent metal cation as cofactor.

The protein resides in the secreted. It localises to the cell wall. The catalysed reaction is a nucleoside 2',3'-cyclic phosphate + H2O = a nucleoside 3'-phosphate + H(+). The enzyme catalyses a ribonucleoside 3'-phosphate + H2O = a ribonucleoside + phosphate. It carries out the reaction a ribonucleoside 5'-phosphate + H2O = a ribonucleoside + phosphate. Its function is as follows. Catalyzes the release of inorganic phosphate from 2',3'-cyclic nucleotides through consecutive 2',3'-phosphodiesterase and 3'- (or 2') nucleotidase activities. Also possesses a 5'-nucleotidase activity. Does not catalyze the release of inorganic phosphate from 3',5'-cyclic nucleotides. Probably plays a role in the cellular reprocessing of nucleotides present in the medium, under conditions of phosphate shortage. This is Trifunctional nucleotide phosphoesterase protein YfkN (yfkN) from Bacillus subtilis (strain 168).